We begin with the raw amino-acid sequence, 186 residues long: MDNSESWLEIGRIVAAQGLKGELKVMSSSDFPERFEKPGTRWLQSPDRLSIQEVELVRGRYVPGKNLYVIKLAEIADRTQAETLRDYTLLVPSSDRPQLNEGEYHVSDLINLTVYHQQTGEEIGVVTDMLSAGNDLLEVQLNTLNSSENTSSKKVLIPFVYEIVPVVDLVNKRIEINPPVGLLELS.

Residues N100–L182 form the PRC barrel domain.

Belongs to the RimM family. As to quaternary structure, binds ribosomal protein uS19.

It is found in the cytoplasm. In terms of biological role, an accessory protein needed during the final step in the assembly of 30S ribosomal subunit, possibly for assembly of the head region. Essential for efficient processing of 16S rRNA. May be needed both before and after RbfA during the maturation of 16S rRNA. It has affinity for free ribosomal 30S subunits but not for 70S ribosomes. This chain is Ribosome maturation factor RimM, found in Rippkaea orientalis (strain PCC 8801 / RF-1) (Cyanothece sp. (strain PCC 8801)).